The primary structure comprises 276 residues: D-apionate oxidoisomerase (276 aa).

Residues 12 to 14 (GKM), E33, and D69 contribute to the NAD(+) site. The Zn(2+) site is built by H114 and E184.

The protein belongs to the ApnO family. It depends on Zn(2+) as a cofactor.

The enzyme catalyses D-apionate + NAD(+) = 3-oxoisoapionate + NADH + H(+). It functions in the pathway carbohydrate metabolism. Its function is as follows. Involved in catabolism of D-apiose. Catalyzes the conversion of D-apionate to 3-oxo-isoapionate. The protein is D-apionate oxidoisomerase of Cupriavidus necator (strain ATCC 43291 / DSM 13513 / CCUG 52238 / LMG 8453 / N-1) (Ralstonia eutropha).